The chain runs to 796 residues: Quinoprotein glucose dehydrogenase (796 aa).

Residues 1 to 10 (MAINNTGSRR) are Cytoplasmic-facing. Residues 11–37 (LLVTLTALFAALCGLYLLIGGGWLVAI) form a helical membrane-spanning segment. The Periplasmic portion of the chain corresponds to 38–40 (GGS). A helical transmembrane segment spans residues 41-58 (WYYPIAGLVMLGVAWMLW). At 59–62 (RSKR) the chain is on the cytoplasmic side. A helical membrane pass occupies residues 63–81 (AALWLYAALLLGTMIWGVW). Over 82–95 (EVGFDFWALTPRSD) the chain is Periplasmic. Residues 96-110 (ILVFFGIWLILPFVW) form a helical membrane-spanning segment. Residues 111-118 (RRLVIPAS) are Cytoplasmic-facing. The chain crosses the membrane as a helical span at residues 119–141 (GAVAALVVALLISGGILTWAGFN). Residues 142-796 (DPQEINGTLS…VAYALPDDVK (655 aa)) lie on the Periplasmic side of the membrane. Aspartate 466 functions as the Proton acceptor in the catalytic mechanism.

This sequence belongs to the bacterial PQQ dehydrogenase family. In terms of assembly, monomer. The cofactor is pyrroloquinoline quinone.

It is found in the cell inner membrane. It catalyses the reaction a ubiquinone + D-glucose = D-glucono-1,5-lactone + a ubiquinol. Functionally, GDH is probably involved in energy conservation rather than in sugar metabolism. The chain is Quinoprotein glucose dehydrogenase (gcd) from Escherichia coli (strain K12).